A 100-amino-acid chain; its full sequence is NADH-quinone oxidoreductase subunit K (100 aa).

Transmembrane regions (helical) follow at residues 2 to 22, 29 to 49, and 63 to 83; these read IGLS…LMGV, LMLF…FAAI, and FFII…LIVL.

Belongs to the complex I subunit 4L family. In terms of assembly, NDH-1 is composed of 14 different subunits. Subunits NuoA, H, J, K, L, M, N constitute the membrane sector of the complex.

The protein localises to the cell inner membrane. It carries out the reaction a quinone + NADH + 5 H(+)(in) = a quinol + NAD(+) + 4 H(+)(out). NDH-1 shuttles electrons from NADH, via FMN and iron-sulfur (Fe-S) centers, to quinones in the respiratory chain. The immediate electron acceptor for the enzyme in this species is believed to be ubiquinone. Couples the redox reaction to proton translocation (for every two electrons transferred, four hydrogen ions are translocated across the cytoplasmic membrane), and thus conserves the redox energy in a proton gradient. In Sulfurovum sp. (strain NBC37-1), this protein is NADH-quinone oxidoreductase subunit K.